The sequence spans 278 residues: Probable CCR4-associated factor 1 homolog 5 (278 aa).

The a divalent metal cation site is built by Asp30, Glu32, Asp145, and Asp217.

It belongs to the CAF1 family. As to quaternary structure, component of the CCR4-NOT complex, at least composed of CRR4 and CAF1 proteins. Requires a divalent metal cation as cofactor.

It localises to the nucleus. It is found in the cytoplasm. The catalysed reaction is Exonucleolytic cleavage of poly(A) to 5'-AMP.. Ubiquitous transcription factor required for a diverse set of processes. It is a component of the CCR4 complex involved in the control of gene expression. The sequence is that of Probable CCR4-associated factor 1 homolog 5 (CAF1-5) from Arabidopsis thaliana (Mouse-ear cress).